The sequence spans 125 residues: Snaclec B7 (125 aa).

Intrachain disulfides connect Cys-2–Cys-13, Cys-30–Cys-119, and Cys-96–Cys-111. The C-type lectin domain maps to His-9–Gln-120. Asn-112 carries N-linked (GlcNAc...) asparagine glycosylation.

This sequence belongs to the snaclec family. As to quaternary structure, heterodimer; disulfide-linked. In terms of tissue distribution, expressed by the venom gland.

The protein localises to the secreted. Its function is as follows. Interferes with one step of hemostasis (modulation of platelet aggregation, or coagulation cascade, for example). The protein is Snaclec B7 of Macrovipera lebetinus (Levantine viper).